Consider the following 569-residue polypeptide: Peptide transporter PTR_C (569 aa).

Basic and acidic residues predominate over residues 1 to 25 (MSQNVDEKVVHDDASVIRSVDRSES). Residues 1-43 (MSQNVDEKVVHDDASVIRSVDRSESDSYPDSVSPEGAEPSEEE) form a disordered region. A helical membrane pass occupies residues 54 to 74 (VPLACWLVAIVELAERFSYYG). Asn-98 carries N-linked (GlcNAc...) asparagine glycosylation. A run of 3 helical transmembrane segments spans residues 104–124 (ALSY…AWVA), 134–154 (ISIF…TSLP), and 159–179 (NTSL…TGGV). A glycan (N-linked (GlcNAc...) asparagine) is linked at Asn-212. 8 helical membrane-spanning segments follow: residues 215 to 235 (IQNV…SVIA), 245 to 265 (FWAA…ALFL), 322 to 342 (ALYA…YGQM), 366 to 386 (IDSI…YPFI), 398 to 418 (IFWG…LQHF), 444 to 464 (VALQ…ASIT), 479 to 499 (SFIM…GIAL), and 510 to 530 (WTYT…WFLF).

The protein belongs to the major facilitator superfamily. Proton-dependent oligopeptide transporter (POT/PTR) (TC 2.A.17) family.

Its subcellular location is the cell membrane. It catalyses the reaction a dipeptide(out) + H(+)(out) = a dipeptide(in) + H(+)(in). The catalysed reaction is an L-amino acid tripeptide(out) + H(+)(out) = an L-amino acid tripeptide(in) + H(+)(in). Peptide transporter that exploits the inwardly directed proton motive force to facilitate the cellular uptake of di/tripeptides. Shows strong uptake specificity towards the dipeptides Tyr-Phe and Leu-Gly and the tripeptide Phe-Gly-Gly, when compared to PTR_A and PTR_B. Also able to import peptide-based antifungals such as the peptide-nucleoside drug nikkomycin Z as well as the glucosamine-6-phosphate synthase inhibitor, L-norvalyl-N3-(4-methoxyfumaroyl)-L-2,3-diaminopropionoic acid (Nva-FMDP). This is Peptide transporter PTR_C from Candidozyma auris (Yeast).